Reading from the N-terminus, the 265-residue chain is Undecaprenyl-diphosphatase (265 aa).

7 helical membrane-spanning segments follow: residues I41–F61, L75–I95, Y104–I124, L137–V157, Y180–T200, G215–L235, and Y244–I264.

The protein belongs to the UppP family.

The protein resides in the cell membrane. The catalysed reaction is di-trans,octa-cis-undecaprenyl diphosphate + H2O = di-trans,octa-cis-undecaprenyl phosphate + phosphate + H(+). In terms of biological role, catalyzes the dephosphorylation of undecaprenyl diphosphate (UPP). The sequence is that of Undecaprenyl-diphosphatase from Saccharolobus islandicus (strain Y.N.15.51 / Yellowstone #2) (Sulfolobus islandicus).